The following is a 202-amino-acid chain: Matrix protein (202 aa).

A disordered region spans residues 9 to 31 (KNRRDEDTQKSSPASAPLDDDDL). The PPXY motif motif lies at 35 to 38 (PPEY). The tract at residues 115-151 (KLRRTFIFQWADSRGPLEGEELEYSQEITWDDDTEFV) is essential for glycoprotein binding.

The protein belongs to the lyssavirus matrix protein family. In terms of assembly, homomultimer. Interacts with nucleoprotein and with the cytoplasmic domain of glycoprotein. Interacts with host ATP6V1A; this interaction plays an important role in virion uncoating after viral entry.

It is found in the virion membrane. The protein resides in the host endomembrane system. The protein localises to the host cytoplasm. In terms of biological role, plays a major role in assembly, budding and uncoating of virion after membrane fusion. Completely covers the ribonucleoprotein coil and keep it in condensed bullet-shaped form. Inhibits viral transcription and stimulates replication. Plays a major role in early induction of TRAIL-mediated apoptosis in infected neurons. Inhibits the integrated stress response (ISR) in the infected cell by blocking the formation of stress granules. In Rabies virus (strain SAD B19) (RABV), this protein is Matrix protein (M).